We begin with the raw amino-acid sequence, 91 residues long: Small ribosomal subunit protein uS19 (91 aa).

Belongs to the universal ribosomal protein uS19 family.

In terms of biological role, protein S19 forms a complex with S13 that binds strongly to the 16S ribosomal RNA. This Methylibium petroleiphilum (strain ATCC BAA-1232 / LMG 22953 / PM1) protein is Small ribosomal subunit protein uS19.